The sequence spans 326 residues: Apolipoprotein F (326 aa).

Positions Met1 to Asp35 are cleaved as a signal peptide. The propeptide occupies Ala36–Arg164. Asn118 is a glycosylation site (N-linked (GlcNAc...) asparagine). Thr274 carries O-linked (GalNAc...) threonine glycosylation. Phosphoserine is present on Ser323.

The protein belongs to the apolipoprotein F family. Post-translationally, O-glycosylated with core 1 or possibly core 8 glycans. In terms of tissue distribution, expressed by the liver and secreted in plasma.

It localises to the secreted. Its function is as follows. Minor apolipoprotein that associates with LDL. Inhibits cholesteryl ester transfer protein (CETP) activity and appears to be an important regulator of cholesterol transport. Also associates to a lesser degree with VLDL, Apo-AI and Apo-AII. In Homo sapiens (Human), this protein is Apolipoprotein F (APOF).